Consider the following 514-residue polypeptide: Nucleus accumbens-associated protein 1 (514 aa).

Residues 30 to 94 enclose the BTB domain; that stretch reads CDVSVVVKGH…CYTGRLSMNM (65 aa). Lys-167 participates in a covalent cross-link: Glycyl lysine isopeptide (Lys-Gly) (interchain with G-Cter in SUMO1); alternate. Lys-167 participates in a covalent cross-link: Glycyl lysine isopeptide (Lys-Gly) (interchain with G-Cter in SUMO2); alternate. Lys-182 participates in a covalent cross-link: Glycyl lysine isopeptide (Lys-Gly) (interchain with G-Cter in SUMO2). Disordered stretches follow at residues 183–218 and 241–279; these read RLWD…NRMP and GPSM…EEGT. Ser-187 bears the Phosphoserine mark. The segment covering 242–251 has biased composition (polar residues); it reads PSMSERTSPG. Ser-245 is subject to Phosphoserine; by PKC. Low complexity predominate over residues 252–264; it reads TSSAYTSDSPSSY. Acidic residues predominate over residues 267–279; it reads EEDEEEDAGEEGT. Glycyl lysine isopeptide (Lys-Gly) (interchain with G-Cter in SUMO2) cross-links involve residues Lys-304, Lys-438, Lys-466, and Lys-485. One can recognise a BEN domain in the interval 360–457; that stretch reads GTNVYITRAQ…DMCTNARRVV (98 aa). 2 positions are modified to phosphoserine: Ser-492 and Ser-496.

As to quaternary structure, homooligomer; mediated by the BTB domain. Both isoforms interact with HDAC3 and HDAC4. Interacts (via BTB domain) with CUL3, PSMD7 and RCOR1. Post-translationally, phosphorylated by protein kinase C (PKC). In terms of tissue distribution, highly expressed in the hippocampus, brain cortex, cerebellum and brainstem. Expressed in the nucleus accumbens, olfactory tubercle, the striatum, frontal and parietal cortex and ventral pallidum. Weakly expressed in the heart, liver, kidney, spleen, testis, and skeletal muscle. Isoform 2 is expressed in the brain and liver, less abundantly expressed in the brain than isoform 1.

Its subcellular location is the nucleus. The protein localises to the cytoplasm. Functionally, functions as a transcriptional repressor. Isoform 1 is a stronger transcriptional repressor than isoform 2. Seems to function as a transcriptional corepressor in neuronal cells through recruitment of HDAC3 and HDAC4. Contributes to tumor progression, and tumor cell proliferation and survival. This may be mediated at least in part through repressing transcriptional activity of GADD45GIP1. Required for recruiting the proteasome from the nucleus to the cytoplasm and dendritic spines. The chain is Nucleus accumbens-associated protein 1 (Nacc1) from Rattus norvegicus (Rat).